Consider the following 169-residue polypeptide: Putative antitoxin Rv0268c (169 aa).

Positions 1–11 are enriched in basic residues; that stretch reads MGTRSKSRTRQ. The interval 1–35 is disordered; the sequence is MGTRSKSRTRQLKQSNGCTATTSGASDRRRRARRR. Positions 120 to 153 form a coiled coil; it reads AAILISAERYESLMEELEDLRDRLSVHEREHVTM.

Belongs to the phD/YefM antitoxin family.

Putative antitoxin component of a type II toxin-antitoxin (TA) system; however the expected toxin coding sequence is not found adjacent to this gene. The protein is Putative antitoxin Rv0268c of Mycobacterium tuberculosis (strain ATCC 25618 / H37Rv).